The primary structure comprises 440 residues: MSNQGAFDGAANVESGSRVFVYEVVGMRQNEETDQTNYPIRKSGSVFIRVPYNRMNQEMQRITRLGGKIVSIQTVSALQQLNGRTTIATVTDASSEIAKSEGNGKATPVKTDSGAKGFAKPPAEEQLKKKDNKGNTMTQAKAKHADVPVNLYRPNAPFIGKVISNEPLVKEGGIGIVQHIKFDLTGGNLKYIEGQSIGIIPPGVDKNGKPEKLRLYSIASTRHGDDVDDKTISLCVRQLEYKHPESGETVYGVCSTYLTHIEPGSEVKITGPVGKEMLLPDDPEANVIMLATGTGIAPMRTYLWRMFKDAERAANPEYQFKGFSWLVFGVPTTPNILYKEELEEIQQKYPDNFRLTYAISREQKNPQGGRMYIQDRVAEHADELWQLIKNEKTHTYICGLRGMEEGIDAALSAAAAKEGVTWSDYQKDLKKAGRWHVETY.

The 59-residue stretch at 17-75 (SRVFVYEVVGMRQNEETDQTNYPIRKSGSVFIRVPYNRMNQEMQRITRLGGKIVSIQTV) folds into the CpcD-like domain. The disordered stretch occupies residues 98–142 (AKSEGNGKATPVKTDSGAKGFAKPPAEEQLKKKDNKGNTMTQAKA). Over residues 122–133 (PAEEQLKKKDNK) the composition is skewed to basic and acidic residues. The FAD-binding FR-type domain maps to 155 to 279 (NAPFIGKVIS…TGPVGKEMLL (125 aa)). FAD is bound by residues 214-217 (RLYS), 235-237 (CVR), tyrosine 241, 253-255 (VCS), and threonine 294. Serine 217 and arginine 237 together coordinate NADP(+). Residues threonine 294, 330–331 (VP), 360–361 (SR), 370–374 (RMYIQ), 399–400 (GL), and glutamate 438 contribute to the NADP(+) site.

The protein belongs to the ferredoxin--NADP reductase type 1 family. Requires FAD as cofactor.

The protein resides in the cellular thylakoid membrane. The catalysed reaction is 2 reduced [2Fe-2S]-[ferredoxin] + NADP(+) + H(+) = 2 oxidized [2Fe-2S]-[ferredoxin] + NADPH. This Nostoc sp. (strain PCC 7120 / SAG 25.82 / UTEX 2576) protein is Ferredoxin--NADP reductase (petH).